Consider the following 344-residue polypeptide: Methionine import ATP-binding protein MetN (344 aa).

In terms of domain architecture, ABC transporter spans 2–241; the sequence is LELKQVGKVY…PQAEVTKAFV (240 aa). Position 38 to 45 (38 to 45) interacts with ATP; that stretch reads GYSGAGKS.

Belongs to the ABC transporter superfamily. Methionine importer (TC 3.A.1.24) family. The complex is composed of two ATP-binding proteins (MetN), two transmembrane proteins (MetI) and a solute-binding protein (MetQ).

The protein localises to the cell membrane. It carries out the reaction L-methionine(out) + ATP + H2O = L-methionine(in) + ADP + phosphate + H(+). It catalyses the reaction D-methionine(out) + ATP + H2O = D-methionine(in) + ADP + phosphate + H(+). Functionally, part of the ABC transporter complex MetNIQ involved in methionine import. Responsible for energy coupling to the transport system. This is Methionine import ATP-binding protein MetN from Latilactobacillus sakei subsp. sakei (strain 23K) (Lactobacillus sakei subsp. sakei).